The following is a 295-amino-acid chain: GTP cyclohydrolase FolE2 (295 aa).

It belongs to the GTP cyclohydrolase IV family.

It carries out the reaction GTP + H2O = 7,8-dihydroneopterin 3'-triphosphate + formate + H(+). It functions in the pathway cofactor biosynthesis; 7,8-dihydroneopterin triphosphate biosynthesis; 7,8-dihydroneopterin triphosphate from GTP: step 1/1. In terms of biological role, converts GTP to 7,8-dihydroneopterin triphosphate. In Pseudomonas putida (strain W619), this protein is GTP cyclohydrolase FolE2.